Consider the following 287-residue polypeptide: Inhibitory synaptic factor 1 (287 aa).

Residues 1–22 form a disordered region; that stretch reads MSQSRAPAREPSETPSQREQIR. A coiled-coil region spans residues 25-58; the sequence is MKMVIQQLEGILKELKDVAHELREVVGQIDKLTS. Disordered stretches follow at residues 113 to 174 and 189 to 287; these read RRSA…GTRE and CDDD…NKDL. Residues 153–167 are compositionally biased toward low complexity; that stretch reads EEASSSTHSQSQKTS. A compositionally biased stretch (acidic residues) spans 189–209; sequence CDDDEDEDEDEDGRDEEEDKL. The span at 259–274 shows a compositional bias: polar residues; the sequence is RNSSTQTVSDKSTQTL.

This sequence belongs to the INSYN1 family.

The protein resides in the postsynaptic density. In terms of biological role, may be a component of the protein machinery at the inhibitory synapses, probably acting as a scaffold. This chain is Inhibitory synaptic factor 1, found in Danio rerio (Zebrafish).